The primary structure comprises 408 residues: GTPase Obg (408 aa).

Residues methionine 1–leucine 159 form the Obg domain. Residues asparagine 127–arginine 150 are disordered. Over residues arginine 129–proline 143 the composition is skewed to polar residues. The 174-residue stretch at alanine 160–glutamate 333 folds into the OBG-type G domain. GTP is bound by residues glycine 166–serine 173, phenylalanine 191–valine 195, aspartate 213–glycine 216, asparagine 283–aspartate 286, and serine 314–isoleucine 316. Mg(2+)-binding residues include serine 173 and threonine 193. The disordered stretch occupies residues histidine 382 to aspartate 408. The segment covering glycine 385–proline 401 has biased composition (acidic residues).

This sequence belongs to the TRAFAC class OBG-HflX-like GTPase superfamily. OBG GTPase family. As to quaternary structure, monomer. Mg(2+) is required as a cofactor.

Its subcellular location is the cytoplasm. Its function is as follows. An essential GTPase which binds GTP, GDP and possibly (p)ppGpp with moderate affinity, with high nucleotide exchange rates and a fairly low GTP hydrolysis rate. Plays a role in control of the cell cycle, stress response, ribosome biogenesis and in those bacteria that undergo differentiation, in morphogenesis control. The chain is GTPase Obg from Pseudomonas putida (strain GB-1).